Consider the following 301-residue polypeptide: Nitric oxide synthase-interacting protein (301 aa).

Ser-36 carries the phosphoserine modification. Residues 55–75 (DPVVTPDGYLYEREAILEYIL) form a U-box-like region. The Nuclear localization signal motif lies at 78–101 (KREIARQVKAYEKQRGARREEQKE). Residues 131–154 (PKAATLPNTEGEQPGPSVGPVGKD) form a disordered region.

The protein belongs to the NOSIP family. Interacts with NOS1 and NOS3. Interacts with PP2A holoenzyme, containing PPP2CA, PPP2CB, PPP2R1A and PPP2R2A subunits.

The protein resides in the cytoplasm. It is found in the nucleus. It catalyses the reaction S-ubiquitinyl-[E2 ubiquitin-conjugating enzyme]-L-cysteine + [acceptor protein]-L-lysine = [E2 ubiquitin-conjugating enzyme]-L-cysteine + N(6)-ubiquitinyl-[acceptor protein]-L-lysine.. It participates in protein modification; protein ubiquitination. Its function is as follows. E3 ubiquitin-protein ligase that is essential for proper development of the forebrain, the eye and the face. Catalyzes monoubiquitination of serine/threonine-protein phosphatase 2A (PP2A) catalytic subunit PPP2CA/PPP2CB. Negatively regulates nitric oxide production by inducing NOS1 and NOS3 translocation to actin cytoskeleton and inhibiting their enzymatic activity. This chain is Nitric oxide synthase-interacting protein (Nosip), found in Mus musculus (Mouse).